The following is a 462-amino-acid chain: Cysteine--tRNA ligase (462 aa).

C24 is a binding site for Zn(2+). A 'HIGH' region motif is present at residues 26–36 (PTVYDDAHLGH). C199, H224, and E228 together coordinate Zn(2+). The 'KMSKS' region motif lies at 256-260 (KMSKS). K259 is an ATP binding site.

This sequence belongs to the class-I aminoacyl-tRNA synthetase family. In terms of assembly, monomer. It depends on Zn(2+) as a cofactor.

It is found in the cytoplasm. It catalyses the reaction tRNA(Cys) + L-cysteine + ATP = L-cysteinyl-tRNA(Cys) + AMP + diphosphate. The sequence is that of Cysteine--tRNA ligase (cysS) from Campylobacter jejuni subsp. jejuni serotype O:2 (strain ATCC 700819 / NCTC 11168).